Here is a 664-residue protein sequence, read N- to C-terminus: Cyclic nucleotide-gated channel alpha-2 (664 aa).

Residues 1–20 (MTEKSNGVKSSPANNHNNHV) are compositionally biased toward polar residues. Residues 1–49 (MTEKSNGVKSSPANNHNNHVPATIKANGKDESRTRSRPQSAADDDTSSE) are disordered. Over 1–144 (MTEKSNGVKS…PAGDWYYRWL (144 aa)) the chain is Cytoplasmic. The helical transmembrane segment at 145 to 166 (FVIAMPVLYNWCLLVARACFSD) threads the bilayer. Topologically, residues 167 to 176 (LQRGYFLVWL) are extracellular. A helical membrane pass occupies residues 177–197 (VLDYFSDVVYIADLFIRLRTG). The Cytoplasmic portion of the chain corresponds to 198-222 (FLEQGLLVKDPKKLRDNYIHTLQFK). Residues 223-241 (LDVASIIPTDLIYFAVGIH) form a helical membrane-spanning segment. Topologically, residues 242 to 246 (NPELR) are extracellular. A helical membrane pass occupies residues 247-265 (FNRLLHFARMFEFFDRTET). Residues 266–272 (RTSYPNI) lie on the Cytoplasmic side of the membrane. The interval 270 to 378 (PNIFRISNLV…GNVGSMISNM (109 aa)) is ion conduction pathway. Residues 273 to 296 (FRISNLVLYILVIIHWNACIYYAI) traverse the membrane as a helical segment. The Extracellular portion of the chain corresponds to 297-319 (SKSIGFGVDTWVYPNITDPEYGY). The next 2 helical transmembrane spans lie at 320–354 (LAREYIYCLYWSTLTLTTIGETPPPVKDEEYLFVI) and 355–379 (FDFLIGVLIFATIVGNVGSMISNMN). Residues 337 to 340 (TIGE) are selectivity filter. Residues 380–456 (ATRAEFQAKI…STLKKVRIFQ (77 aa)) form a C-linker region. The Cytoplasmic segment spans residues 380-664 (ATRAEFQAKI…SPEPAAAEQP (285 aa)). The interval 460–580 (AGLLVELVLK…EERGREILMK (121 aa)) is cyclic nucleotide-binding domain. 3',5'-cyclic GMP-binding residues include G520, S523, R536, and T537. Positions 536 and 537 each coordinate 3',5'-cyclic AMP. The stretch at 597 to 651 (VQEKLKQLETNMETLYTRFGRLLAEYTGAQQKLKQRITVLEVKMKQNTEDDYLSD) forms a coiled coil. The tract at residues 644 to 664 (TEDDYLSDGMNSPEPAAAEQP) is disordered.

Belongs to the cyclic nucleotide-gated cation channel (TC 1.A.1.5) family. CNGA2 subfamily. In terms of assembly, the olfactory cyclic nucleotide-gated channel is an heterotetramer composed of CNGA2, CNGA4 and CNGB1b subunits with 2:1:1 stoichiometry.

The protein localises to the cell projection. Its subcellular location is the cilium membrane. It catalyses the reaction Ca(2+)(in) = Ca(2+)(out). The enzyme catalyses Na(+)(in) = Na(+)(out). The catalysed reaction is K(+)(in) = K(+)(out). It carries out the reaction NH4(+)(in) = NH4(+)(out). It catalyses the reaction Rb(+)(in) = Rb(+)(out). The enzyme catalyses Li(+)(in) = Li(+)(out). The catalysed reaction is Cs(+)(in) = Cs(+)(out). In terms of biological role, pore-forming subunit of the olfactory cyclic nucleotide-gated channel. Operates in the cilia of olfactory sensory neurons where chemical stimulation of the odorant is converted to an electrical signal. Mediates odorant-induced cAMP-dependent Ca(2+) influx triggering neuron depolarization. The rise of intracellular Ca(2+) levels potentiates the olfactory response by activating Ca(2+)-dependent Cl(-) channels, but it also serves as a negative feedback signal to desensitize the channel for rapid adaptation to odorants. Conducts cAMP- and cGMP-gated ion currents, with permeability for monovalent and divalent cations. The sequence is that of Cyclic nucleotide-gated channel alpha-2 from Oryctolagus cuniculus (Rabbit).